The sequence spans 262 residues: Putative glycyl-radical enzyme activating enzyme HI_0520 (262 aa).

A Radical SAM core domain is found at 20 to 262; sequence VEGQGNRSSI…CGINKILTIL (243 aa). [4Fe-4S] cluster-binding residues include cysteine 34, cysteine 38, and cysteine 41. S-adenosyl-L-methionine-binding positions include 40–42, glycine 81, and 130–132; these read YCH and DLK.

The protein belongs to the organic radical-activating enzymes family. [4Fe-4S] cluster is required as a cofactor.

It carries out the reaction glycyl-[protein] + reduced [flavodoxin] + S-adenosyl-L-methionine = glycin-2-yl radical-[protein] + semiquinone [flavodoxin] + 5'-deoxyadenosine + L-methionine + H(+). This Haemophilus influenzae (strain ATCC 51907 / DSM 11121 / KW20 / Rd) protein is Putative glycyl-radical enzyme activating enzyme HI_0520.